We begin with the raw amino-acid sequence, 1446 residues long: Bud site selection protein 4 (1446 aa).

Disordered regions lie at residues 69–103 (NQWN…TNLL), 358–385 (VSEE…NPSS), 425–446 (DNNI…SGKE), 495–525 (ASED…QNLE), 823–844 (SSSL…SQAF), and 1025–1044 (KKNT…RVSS). Residues 86-98 (NYDDDEEQGDESD) are compositionally biased toward acidic residues. Composition is skewed to polar residues over residues 425–434 (DNNISKSAND) and 495–524 (ASED…QQNL). The span at 1028–1044 (TQKDLKDGTTAEKRVSS) shows a compositional bias: basic and acidic residues. Positions 1314–1425 (DITKEGYLLQ…WYMKLKEVVE (112 aa)) constitute a PH domain.

This sequence belongs to the BUD4 family.

The protein localises to the bud neck. In terms of biological role, required for selection of future bud sites. Cooperates with other bud site selection proteins to recognize a spatial landmark during mitosis and they subsequently become a landmark for downstream polarity establishment factors that coordinate budding and cytokinesis. Involved in the septin organization at the bud neck. The protein is Bud site selection protein 4 (BUD4) of Candida glabrata (strain ATCC 2001 / BCRC 20586 / JCM 3761 / NBRC 0622 / NRRL Y-65 / CBS 138) (Yeast).